Here is a 177-residue protein sequence, read N- to C-terminus: ATP synthase subunit delta (177 aa).

Belongs to the ATPase delta chain family. F-type ATPases have 2 components, F(1) - the catalytic core - and F(0) - the membrane proton channel. F(1) has five subunits: alpha(3), beta(3), gamma(1), delta(1), epsilon(1). F(0) has three main subunits: a(1), b(2) and c(10-14). The alpha and beta chains form an alternating ring which encloses part of the gamma chain. F(1) is attached to F(0) by a central stalk formed by the gamma and epsilon chains, while a peripheral stalk is formed by the delta and b chains.

The protein resides in the cell inner membrane. Functionally, f(1)F(0) ATP synthase produces ATP from ADP in the presence of a proton or sodium gradient. F-type ATPases consist of two structural domains, F(1) containing the extramembraneous catalytic core and F(0) containing the membrane proton channel, linked together by a central stalk and a peripheral stalk. During catalysis, ATP synthesis in the catalytic domain of F(1) is coupled via a rotary mechanism of the central stalk subunits to proton translocation. Its function is as follows. This protein is part of the stalk that links CF(0) to CF(1). It either transmits conformational changes from CF(0) to CF(1) or is implicated in proton conduction. The protein is ATP synthase subunit delta of Shewanella piezotolerans (strain WP3 / JCM 13877).